The following is a 429-amino-acid chain: Adenylosuccinate synthetase (429 aa).

Residues 12-18 (GDEGKGK) and 40-42 (GHT) contribute to the GTP site. D13 acts as the Proton acceptor in catalysis. Mg(2+) contacts are provided by D13 and G40. IMP contacts are provided by residues 13–16 (DEGK), 38–41 (NAGH), T128, R142, Q224, T239, and R303. The Proton donor role is filled by H41. A substrate-binding site is contributed by 299–305 (VTTGRPR). GTP is bound by residues R305, 331–333 (LLD), and 413–415 (SVG).

The protein belongs to the adenylosuccinate synthetase family. As to quaternary structure, homodimer. The cofactor is Mg(2+).

It is found in the cytoplasm. The catalysed reaction is IMP + L-aspartate + GTP = N(6)-(1,2-dicarboxyethyl)-AMP + GDP + phosphate + 2 H(+). It functions in the pathway purine metabolism; AMP biosynthesis via de novo pathway; AMP from IMP: step 1/2. Plays an important role in the de novo pathway of purine nucleotide biosynthesis. Catalyzes the first committed step in the biosynthesis of AMP from IMP. The protein is Adenylosuccinate synthetase of Clostridioides difficile (strain 630) (Peptoclostridium difficile).